The chain runs to 147 residues: Probable 4-amino-4-deoxy-L-arabinose-phosphoundecaprenol flippase subunit ArnF (147 aa).

At 1 to 23 the chain is on the cytoplasmic side; the sequence is MSNDHPQGQLPASPARSALKGYL. The helical transmembrane segment at 24–44 threads the bilayer; the sequence is YVLGSILLVTAAQLGMKWGVI. The Periplasmic portion of the chain corresponds to 45-62; that stretch reads QLPTWQMDLAVMLAHPLP. A helical transmembrane segment spans residues 63–83; it reads LLVILAGVGCYALSLLCWLAA. The Cytoplasmic segment spans residues 84 to 93; that stretch reads LHSTPLNIAY. A helical membrane pass occupies residues 94–114; sequence PLLSTSYALVYLLAVNIPLFA. At 115 to 121 the chain is on the periplasmic side; sequence EPLEPGK. The helical transmembrane segment at 122–142 threads the bilayer; that stretch reads ALGVLFILLGAVLVGIKPAAG. Residues 143–147 lie on the Cytoplasmic side of the membrane; that stretch reads TKQTG.

This sequence belongs to the ArnF family. Heterodimer of ArnE and ArnF.

It localises to the cell inner membrane. It functions in the pathway bacterial outer membrane biogenesis; lipopolysaccharide biosynthesis. Functionally, translocates 4-amino-4-deoxy-L-arabinose-phosphoundecaprenol (alpha-L-Ara4N-phosphoundecaprenol) from the cytoplasmic to the periplasmic side of the inner membrane. This is Probable 4-amino-4-deoxy-L-arabinose-phosphoundecaprenol flippase subunit ArnF from Aeromonas hydrophila subsp. hydrophila (strain ATCC 7966 / DSM 30187 / BCRC 13018 / CCUG 14551 / JCM 1027 / KCTC 2358 / NCIMB 9240 / NCTC 8049).